Here is a 338-residue protein sequence, read N- to C-terminus: Clavatol oxidase claD (338 aa).

Residues 193 to 299 (DPMSLLRLLH…RYSVVFFYDG (107 aa)) enclose the Fe2OG dioxygenase domain. 3 residues coordinate Fe cation: His-222, Asp-224, and His-280. Arg-290 contacts 2-oxoglutarate.

The protein belongs to the iron/ascorbate-dependent oxidoreductase family. It depends on Fe(2+) as a cofactor.

It carries out the reaction clavatol + 2-oxoglutarate + O2 = hydroxyclavatol + succinate + CO2. It participates in secondary metabolite biosynthesis. 2-oxoglutarate-dependent dioxygenase; part of the cla gene cluster that produces clavatol and ortho-quinone methide. The clavatol biosynthesis cluster cla and the terrestric acid cluster tra are both involved in the production of peniphenones and penilactones. The non-reducing PKS claF is responsible for the formation of clavatol from successive condensations of 3 malonyl-CoA units, presumably with a simple acetyl-CoA starter unit, and 2 methylation steps. The esterase claE probably collaborates with claF by catalyzing the hydrolysis of ACP-bound acyl intermediates to free the ACP from stalled intermediates. The clavatol oxidase claD then converts clavatol to hydroxyclavatol. Spontaneous dehydration of hydroxyclavatol leads to the accumulation of the highly active ortho-quinone methide. On the other hand, the PKS-NRPS hybrid traA is involved in the formation of crustosic acid, with the help of traB and traD. The polyketide synthase module (PKS) of traA is responsible for the synthesis of the polyketide backbone via the condensation of an acetyl-CoA starter unit with 3 malonyl-CoA units. The downstream nonribosomal peptide synthetase (NRPS) module then amidates the carboxyl end of the polyketide with L-malic acid. Because traA lacks a designated enoylreductase (ER) domain, the required activity is provided the enoyl reductase traG. Crustosic acid undergoes decarboxylation and isomerization to the terrestric acid, catalyzed by the 2-oxoglutarate-dependent dioxygenase traH. Both acids are further converted to the 2 gamma-butyrolactones (R)-5-methyltetronic acid and (S)-5-carboxylmethyltetronic acid, with involvement of the cytochrome P450 monooxygenase claJ. Spontaneous addition of the methide to these gamma-butyrolactones leads to peniphenone D and penilactone D, which undergo again stereospecific attacking by methide to give penilactones A and B. The polypeptide is Clavatol oxidase claD (Penicillium crustosum (Blue mold fungus)).